We begin with the raw amino-acid sequence, 482 residues long: Dual specificity protein phosphatase 10 (482 aa).

Positions 168-285 constitute a Rhodanese domain; the sequence is PSQGPVIIDC…FKQNHENLCD (118 aa). Positions 199-215 are interaction with MAP kinases; it reads KISRRRLQQGKITVLDL. The region spanning 321–464 is the Tyrosine-protein phosphatase domain; sequence ELTPILPFLF…LLEFEEDLNN (144 aa). The active-site Phosphocysteine intermediate is the Cys408.

Belongs to the protein-tyrosine phosphatase family. Non-receptor class dual specificity subfamily. Monomer. Interacts with MAPK14.

It localises to the cytoplasm. It is found in the nucleus. The catalysed reaction is O-phospho-L-tyrosyl-[protein] + H2O = L-tyrosyl-[protein] + phosphate. It catalyses the reaction O-phospho-L-seryl-[protein] + H2O = L-seryl-[protein] + phosphate. The enzyme catalyses O-phospho-L-threonyl-[protein] + H2O = L-threonyl-[protein] + phosphate. Protein phosphatase involved in the inactivation of MAP kinases. Has a specificity for the MAPK11/MAPK12/MAPK13/MAPK14 subfamily. It preferably dephosphorylates p38. In Bos taurus (Bovine), this protein is Dual specificity protein phosphatase 10 (DUSP10).